Reading from the N-terminus, the 295-residue chain is Hydroxylase/desaturase efuI (295 aa).

Belongs to the asaB hydroxylase/desaturase family.

It functions in the pathway secondary metabolite biosynthesis; terpenoid biosynthesis. Hydroxylase/desaturase; part of the gene cluster that mediates the biosynthesis of enfumafungin, a glycosylated fernene-type triterpenoid with potent antifungal activity, mediated by its interaction with beta-1,3-glucan synthase and the fungal cell wall. The pathway begins with the terpene cyclase-glycosyl transferase fusion protein that most likely uses 2,3-oxidosqualene as substrate and catalyzes glycosylation immediately after cyclization. The fernene glycoside then could be processed by the desaturase efuI which catalyzes isomerization of a double bond established by efuA to form the core structure. The latter would then undergo a series of hydroxylations in unknown order at C-2, C-19, C-23 and C-25, which would be catalyzed by two of the three cytochrome P450 monooxygenases efuB, efuG or efuH. The hydroxy-group at C-25 becomes oxidized by the dehydrogenase efuE to enable a spontaneous, non-enzymatic hemiacetal formation with C-23. After hydroxylation at C-2, acetylation by the acetyltransferase efuC takes place. The final steps in enfumafungin biosynthesis require expansion of the 5-membered ring by lactonization via a Baeyer-Villiger reaction mediated by one of the BGC's cytochrome P450 monooxygenases (efuB, efuG or efuH) followed by ring cleavage. This type of reaction would establish a double bond between C-20 and C-21 which could be reduced by the reductase efuL to form the final product. The polypeptide is Hydroxylase/desaturase efuI (Hormonema carpetanum).